The primary structure comprises 257 residues: tRNA (cytidine/uridine/adenosine-2'-O-)-methyltransferase TrmJ (257 aa).

Residues 79–82, 115–117, Ile135, and 142–144 each bind S-adenosyl-L-methionine; these read TSAR, GRE, and GSL.

It belongs to the class IV-like SAM-binding methyltransferase superfamily. RNA methyltransferase TrmH family. Homodimer.

The protein resides in the cytoplasm. The catalysed reaction is cytidine(32) in tRNA + S-adenosyl-L-methionine = 2'-O-methylcytidine(32) in tRNA + S-adenosyl-L-homocysteine + H(+). The enzyme catalyses uridine(32) in tRNA + S-adenosyl-L-methionine = 2'-O-methyluridine(32) in tRNA + S-adenosyl-L-homocysteine + H(+). It catalyses the reaction adenosine(32) in tRNA + S-adenosyl-L-methionine = 2'-O-methyladenosine(32) in tRNA + S-adenosyl-L-homocysteine + H(+). Its function is as follows. Catalyzes the formation of 2'O-methylated cytidine (Cm32), 2'O-methylated uridine (Um32) or 2'O-methylated adenosine (Am32) at position 32 in tRNA. Confers resistance to oxidative stress. In Pseudomonas aeruginosa (strain UCBPP-PA14), this protein is tRNA (cytidine/uridine/adenosine-2'-O-)-methyltransferase TrmJ.